Reading from the N-terminus, the 350-residue chain is Serine/arginine-rich splicing factor RS40 (350 aa).

RRM domains lie at 2-74 (KPVF…WTKS) and 97-168 (KTLF…YAVK). Composition is skewed to basic and acidic residues over residues 73-82 (KSERGGDKRS) and 167-187 (VKDD…DRSP). Disordered regions lie at residues 73–94 (KSER…SSMR) and 167–350 (VKDD…PADE). Ser193, Ser195, and Ser211 each carry phosphoserine. Composition is skewed to basic and acidic residues over residues 216–227 (YRKERTSPDYGR) and 240–255 (GSPE…DSPR). Phosphoserine is present on residues Ser241, Ser262, Ser278, Ser298, Ser308, Ser335, and Ser340. Residues 272 to 289 (NKRERMSPNHSPFKKESP) show a composition bias toward basic and acidic residues. The segment covering 299–308 (PIERRERSRS) has biased composition (basic and acidic residues).

The protein belongs to the splicing factor SR family. RS subfamily. Component of the spliceosome. Interacts with SNRNP35. Interacts with CYP59. Interacts with RCF3 and CPL1. Interacts with DRB1/HYL1 and SE. In terms of tissue distribution, highly expressed in roots and flowers. A presumably longer alternatively spliced form is found in leaves, stems and flowers.

The protein localises to the nucleus. It localises to the nucleus speckle. Its function is as follows. Required for constitutive and alternative pre-mRNA splicing. Involved in primary miRNA processing and pri-miRNA biogenesis. Binds both intronless and intron-containing pri-miRNAs. This chain is Serine/arginine-rich splicing factor RS40 (RS40), found in Arabidopsis thaliana (Mouse-ear cress).